The primary structure comprises 87 residues: U14-lycotoxin-Ls1b (87 aa).

The signal sequence occupies residues 1–20; that stretch reads MNSKVFAVLLLLALSTCVLS. Positions 21-66 constitute a WAP domain; the sequence is EKYCPTPRNTSCKKMNIRNNCCRDSDCTSNAFCCAEPCGNFCHKAS. 5 disulfide bridges follow: C24-C54, C32-C58, C41-C53, C42-C80, and C47-C62.

This sequence belongs to the venom protein 11 family. 01 (wap-1) subfamily. Contains 5 disulfide bonds. As to expression, expressed by the venom gland.

The protein localises to the secreted. Its function is as follows. Has antibacterial activity. The chain is U14-lycotoxin-Ls1b from Lycosa singoriensis (Wolf spider).